The chain runs to 365 residues: Transcription factor TCP2 (365 aa).

One can recognise a TCP domain in the interval 42 to 100 (GKDRHSKVLTSKGPRDRRVRLSVSTALQFYDLQDRLGYDQPSKAVEWLIKAAEDSISEL). A compositionally biased stretch (low complexity) spans 130–150 (KSACSSNSDTSKNSSGLSLSR). 2 disordered regions span residues 130 to 202 (KSAC…SAPS) and 220 to 245 (QTHFPISTNSHPFSSISDHHHHHPHH). The R domain maps to 151-172 (SELRDKARERARERTAKETKER). Basic and acidic residues predominate over residues 151 to 176 (SELRDKARERARERTAKETKERDHNH). Over residues 177–202 (TSFTDLLNSGSDPVNSNRQWMASAPS) the composition is skewed to polar residues.

Interacts with SPL. Interacts with CRY1. In terms of tissue distribution, expressed in cotyledons, particularly in the vascular region, in leaves, roots, buds, flowers and immature siliques.

The protein resides in the nucleus. Its function is as follows. Plays a pivotal role in the control of morphogenesis of shoot organs by negatively regulating the expression of boundary-specific genes such as CUC genes, probably through the induction of miRNA (e.g. miR164). Participates in ovule development. Promotes light-regulated transcription of CHS, CAB, HYH and HY5. Positively regulates photomorphogenesis (e.g. hypocotyl elongation inhibition and cotyledon opening in response to blue light). This is Transcription factor TCP2 from Arabidopsis thaliana (Mouse-ear cress).